A 351-amino-acid chain; its full sequence is Polycomb group RING finger protein 6 (351 aa).

Positions 1–114 (MEEAETDATE…FSLRLESGRA (114 aa)) are disordered. Basic and acidic residues predominate over residues 9-19 (TENKRASEAKR). Pro residues predominate over residues 24–37 (LPPPPPPISPPALI). At serine 32 the chain carries Phosphoserine. The span at 38 to 51 (PAPAAGEEGPASLA) shows a compositional bias: low complexity. The segment covering 62–80 (RPPELEPERSLGRLRGRFE) has biased composition (basic and acidic residues). Positions 69 to 110 (ERSLGRLRGRFEDYDEELEEDEEMEEEEEEEEEMSHFSLRLE) form a coiled coil. Residues 81 to 101 (DYDEELEEDEEMEEEEEEEEE) are compositionally biased toward acidic residues. Serine 116 bears the Phosphoserine mark. The RING-type zinc finger occupies 135 to 174 (CSICKGYLIDATTITECLHTFCKSCIVRHFYYSNRCPKCN). Residues lysine 224 and lysine 235 each participate in a glycyl lysine isopeptide (Lys-Gly) (interchain with G-Cter in SUMO2) cross-link.

In terms of assembly, component of a PRC1-like complex. Interacts with BMI1/PCGF4, RING1 and RNF2. Interacts with KDM5D. Interacts with CBX4, CBX6, CBX7 and CBX8. Phosphorylated during mitosis.

It localises to the nucleus. Transcriptional repressor. May modulate the levels of histone H3K4Me3 by activating KDM5D histone demethylase. Component of a Polycomb group (PcG) multiprotein PRC1-like complex, a complex class required to maintain the transcriptionally repressive state of many genes, including Hox genes, throughout development. PcG PRC1 complex acts via chromatin remodeling and modification of histones; it mediates monoubiquitination of histone H2A 'Lys-119', rendering chromatin heritably changed in its expressibility. Within the PRC1-like complex, regulates RNF2 ubiquitin ligase activity. The protein is Polycomb group RING finger protein 6 (Pcgf6) of Rattus norvegicus (Rat).